The primary structure comprises 348 residues: Dihydroorotase (348 aa).

Residues H17 and H19 each contribute to the Zn(2+) site. Residues 19-21 and N45 each bind substrate; that span reads HLR. Zn(2+) is bound by residues K103, H140, and H178. At K103 the chain carries N6-carboxylysine. H140 contributes to the substrate binding site. Substrate is bound at residue L223. D251 is a binding site for Zn(2+). D251 is a catalytic residue. Substrate-binding residues include H255 and A267.

The protein belongs to the metallo-dependent hydrolases superfamily. DHOase family. Class II DHOase subfamily. Homodimer. Zn(2+) serves as cofactor.

It carries out the reaction (S)-dihydroorotate + H2O = N-carbamoyl-L-aspartate + H(+). Its pathway is pyrimidine metabolism; UMP biosynthesis via de novo pathway; (S)-dihydroorotate from bicarbonate: step 3/3. In terms of biological role, catalyzes the reversible cyclization of carbamoyl aspartate to dihydroorotate. The protein is Dihydroorotase of Escherichia coli O6:K15:H31 (strain 536 / UPEC).